The chain runs to 432 residues: MIDVDALSKKYPAIKQMQAYEPIFWKNLNYKKEAELPVGVEHIFDAEARFQRFAPYFEVAFPETLPTHGILESPLLKMDKMKAVLNAEAQNQVKGDLYLKADNYLPISGSIKSRGGIYEVLKFAEKVAMKHGEIVYGDNYAKLNEPRFKDLFGQYGIVVGSTGNLGLSIGIVACKLGFRTSVHMSSDAAQWKKDMLREKGVNVVEYNDNFTHAITEARKSAEADPMAYFIDDEGSYDLFLGYSVAAVRLQAQLKAQNIKVDAEHPLFVYLPAGVGGSPSGVAFGLKKIIGENVHPIFAEPTHIPSVSLGMMTGLNDQISVYDAGIDGVTKADGLAVGRPSRIAGKMMDTLLYGIQTFDDQKMMKNVAELHDSENVDVEPSAASGFTILDDVQAQLEQDYPMENASHIVWATGGSMVPKNDMDQYVAEGHQVK.

Lys112 is subject to N6-(pyridoxal phosphate)lysine.

It belongs to the serine/threonine dehydratase family. DsdA subfamily. Pyridoxal 5'-phosphate is required as a cofactor.

It catalyses the reaction D-serine = pyruvate + NH4(+). This Pediococcus pentosaceus (strain ATCC 25745 / CCUG 21536 / LMG 10740 / 183-1w) protein is Probable D-serine dehydratase.